Here is a 377-residue protein sequence, read N- to C-terminus: Chaperone protein DnaJ (377 aa).

Residues 5 to 70 (DFYEVLGVER…SKRAAYDQYG (66 aa)) form the J domain. Residues 136–214 (GTTVTIRVPT…CHGQGRVEEQ (79 aa)) form a CR-type zinc finger. Cys149, Cys152, Cys166, Cys169, Cys188, Cys191, Cys202, and Cys205 together coordinate Zn(2+). CXXCXGXG motif repeat units lie at residues 149–156 (CKTCNGSG), 166–173 (CTTCGGIG), 188–195 (CPRCHGTG), and 202–209 (CGSCHGQG).

The protein belongs to the DnaJ family. As to quaternary structure, homodimer. Zn(2+) serves as cofactor.

The protein localises to the cytoplasm. Functionally, participates actively in the response to hyperosmotic and heat shock by preventing the aggregation of stress-denatured proteins and by disaggregating proteins, also in an autonomous, DnaK-independent fashion. Unfolded proteins bind initially to DnaJ; upon interaction with the DnaJ-bound protein, DnaK hydrolyzes its bound ATP, resulting in the formation of a stable complex. GrpE releases ADP from DnaK; ATP binding to DnaK triggers the release of the substrate protein, thus completing the reaction cycle. Several rounds of ATP-dependent interactions between DnaJ, DnaK and GrpE are required for fully efficient folding. Also involved, together with DnaK and GrpE, in the DNA replication of plasmids through activation of initiation proteins. The polypeptide is Chaperone protein DnaJ (Pseudomonas paraeruginosa (strain DSM 24068 / PA7) (Pseudomonas aeruginosa (strain PA7))).